The chain runs to 207 residues: Pyrrolidone-carboxylate peptidase (207 aa).

Catalysis depends on residues Glu-80, Cys-143, and His-167.

This sequence belongs to the peptidase C15 family. As to quaternary structure, homotetramer.

The protein localises to the cytoplasm. The catalysed reaction is Release of an N-terminal pyroglutamyl group from a polypeptide, the second amino acid generally not being Pro.. Removes 5-oxoproline from various penultimate amino acid residues except L-proline. The polypeptide is Pyrrolidone-carboxylate peptidase (Coprothermobacter proteolyticus (strain ATCC 35245 / DSM 5265 / OCM 4 / BT)).